The chain runs to 229 residues: Putative N-acetylmannosamine-6-phosphate 2-epimerase (229 aa).

The protein belongs to the NanE family.

It catalyses the reaction an N-acyl-D-glucosamine 6-phosphate = an N-acyl-D-mannosamine 6-phosphate. Its pathway is amino-sugar metabolism; N-acetylneuraminate degradation; D-fructose 6-phosphate from N-acetylneuraminate: step 3/5. Functionally, converts N-acetylmannosamine-6-phosphate (ManNAc-6-P) to N-acetylglucosamine-6-phosphate (GlcNAc-6-P). The protein is Putative N-acetylmannosamine-6-phosphate 2-epimerase of Escherichia coli O7:K1 (strain IAI39 / ExPEC).